Here is a 95-residue protein sequence, read N- to C-terminus: RING finger protein Z (95 aa).

Glycine 2 carries the N-myristoyl glycine; by host lipid modification. The segment at 38–74 adopts an RING-type; atypical zinc-finger fold; it reads CKSCWFANRGLIACSDHYLCLNCLTRLRSQSQFCGIC. The short motif at 88 to 91 is the PTAP/PSAP motif element; the sequence is PSAP.

This sequence belongs to the arenaviridae Z protein family. As to quaternary structure, interacts with protein NP; this interaction probably directs the encapsidated genome to budding sites. Interacts (via RING domain) with polymerase L; this interaction inhibits viral transcription and replication, Z partially blocks the product exit tunnel for the releasing nascent RNA product. Interacts with the glycoprotein complex; this interaction plays a role in virion budding. Interacts with host eIF4E; this interaction results in eIF4E reduced affinity for its substrate, the 5'-m7 G cap structure. Interacts (via late-budding domain) with host TSG101; this interaction is essential for budding and release of viral particles. Interacts with host RPLP0; this interaction may serve to load ribosome-like particles inside the virion. Interacts with host PML; this interaction induces PML bodies redistribution in the cytoplasm upon viral infection. Post-translationally, myristoylation is required for the role of RING finger protein Z in assembly and budding.

It localises to the virion. The protein resides in the host cytoplasm. Its subcellular location is the host perinuclear region. The protein localises to the host cell membrane. Plays a crucial role in virion assembly and budding. Expressed late in the virus life cycle, it acts as an inhibitor of viral transcription and RNA synthesis by interacting with the viral polymerase L. Presumably recruits the NP encapsidated genome to cellular membranes at budding sites via direct interaction with NP. Plays critical roles in the final steps of viral release by interacting with host TSG101, a member of the vacuolar protein-sorting pathway and using other cellular host proteins involved in vesicle formation pathway. The budding of the virus progeny occurs after association of protein Z with the viral glycoprotein complex SSP-GP1-GP2 at the cell periphery, step that requires myristoylation of protein Z. Also selectively represses protein production by associating with host eIF4E. In cell-based minigenome assay, has an inhibitory effect on the ribonucleoprotein machinery (vRNP), which is responsible for the replication and transcription of the viral genome. This Pirital mammarenavirus (isolate Rat/Venezuela/VAV-488/1995) (PIRV) protein is RING finger protein Z.